A 330-amino-acid chain; its full sequence is Global transcription regulator sge1 (330 aa).

2 disordered regions span residues 93-123 and 239-306; these read PPGE…RNSV and QYAP…HQPQ. Residues 105 to 114 are compositionally biased toward polar residues; sequence GKSTTQSGGI. Residues 250–306 show a composition bias toward low complexity; the sequence is QQPALQQQPQQQPQPQHQPQLQYQPQPHQHQPQLQYQPQQQHQPQQQYRPQPQHQPQ.

This sequence belongs to the MIT1/WOR1 family.

The protein localises to the nucleus. Its function is as follows. Global transcriptional regulator of pathogenicity. Acts as an activator of parasitic growth. Not essential for colonization or penetration of the root surface, but required for expression of genes encoding effectors that are secreted during infection. Involved in conidiogenesis, but is not required for conidial fitness, overall (colony) morphology, vegetative growth or carbon source utilization. This is Global transcription regulator sge1 from Fusarium oxysporum f. sp. lycopersici (strain 4287 / CBS 123668 / FGSC 9935 / NRRL 34936) (Fusarium vascular wilt of tomato).